A 1088-amino-acid polypeptide reads, in one-letter code: RNA-directed RNA polymerase (1088 aa).

Residues 501–687 (LSYGDVTRFL…AKRYIAGGKI (187 aa)) enclose the RdRp catalytic domain.

Belongs to the reoviridae RNA-directed RNA polymerase family. In terms of assembly, interacts with VP3 (Potential). Interacts with VP2; this interaction activates VP1. Interacts with NSP5; this interaction is probably necessary for the formation of functional virus factories. Interacts with NSP2; this interaction is weak. The cofactor is Mg(2+).

The protein resides in the virion. The catalysed reaction is RNA(n) + a ribonucleoside 5'-triphosphate = RNA(n+1) + diphosphate. In terms of biological role, RNA-directed RNA polymerase that is involved in both transcription and genome replication. Together with VP3 capping enzyme, forms an enzyme complex positioned near the channels situated at each of the five-fold vertices of the core. Following infection, the outermost layer of the virus is lost, leaving a double-layered particle (DLP) made up of the core and VP6 shell. VP1 then catalyzes the transcription of fully conservative plus-strand genomic RNAs that are extruded through the DLP's channels into the cytoplasm where they function as mRNAs for translation of viral proteins. One copy of each of the viral (+)RNAs is also recruited during core assembly, together with newly synthesized polymerase complexes and VP2. The polymerase of these novo-formed particles catalyzes the synthesis of complementary minus-strands leading to dsRNA formation. To do so, the polymerase specifically recognizes and binds 4 bases 5'-UGUG-3' in the conserved 3'-sequence of plus-strand RNA templates. VP2 presumably activates the autoinhibited VP1-RNA complex to coordinate packaging and genome replication. Once dsRNA synthesis is complete, the polymerase switches to the transcriptional mode, thus providing secondary transcription. The polypeptide is RNA-directed RNA polymerase (Rotavirus A (strain RVA/Cow/United States/NCDV-Lincoln/1969/G6P6[1]) (RV-A)).